A 365-amino-acid chain; its full sequence is Succinyl-diaminopimelate desuccinylase (365 aa).

A Zn(2+)-binding site is contributed by H65. D67 is a catalytic residue. Residue D96 coordinates Zn(2+). Catalysis depends on E126, which acts as the Proton acceptor. Residues E127, E155, and H340 each contribute to the Zn(2+) site.

Belongs to the peptidase M20A family. DapE subfamily. In terms of assembly, homodimer. It depends on Zn(2+) as a cofactor. Co(2+) serves as cofactor.

The catalysed reaction is N-succinyl-(2S,6S)-2,6-diaminopimelate + H2O = (2S,6S)-2,6-diaminopimelate + succinate. The protein operates within amino-acid biosynthesis; L-lysine biosynthesis via DAP pathway; LL-2,6-diaminopimelate from (S)-tetrahydrodipicolinate (succinylase route): step 3/3. Catalyzes the hydrolysis of N-succinyl-L,L-diaminopimelic acid (SDAP), forming succinate and LL-2,6-diaminopimelate (DAP), an intermediate involved in the bacterial biosynthesis of lysine and meso-diaminopimelic acid, an essential component of bacterial cell walls. In Campylobacter jejuni subsp. doylei (strain ATCC BAA-1458 / RM4099 / 269.97), this protein is Succinyl-diaminopimelate desuccinylase.